A 242-amino-acid chain; its full sequence is Probable 2-phosphosulfolactate phosphatase (242 aa).

It belongs to the ComB family. The cofactor is Mg(2+).

It catalyses the reaction (2R)-O-phospho-3-sulfolactate + H2O = (2R)-3-sulfolactate + phosphate. The sequence is that of Probable 2-phosphosulfolactate phosphatase from Prochlorococcus marinus (strain NATL2A).